The primary structure comprises 422 residues: FAD-dependent monooxygenase ptmM (422 aa).

A helical transmembrane segment spans residues 8 to 24 (VIIVGGSIAGLTLAHCL). FAD-binding residues include glutamate 35, glycine 49, arginine 108, aspartate 308, and alanine 321.

The protein belongs to the paxM FAD-dependent monooxygenase family. Requires FAD as cofactor.

Its subcellular location is the membrane. It participates in secondary metabolite biosynthesis. In terms of biological role, FAD-dependent monooxygenase; part of the gene cluster that mediates the biosynthesis of the indole diterpenes penitrems. The geranylgeranyl diphosphate (GGPP) synthase ptmG catalyzes the first step in penitrem biosynthesis via conversion of farnesyl pyrophosphate and isopentyl pyrophosphate into geranylgeranyl pyrophosphate (GGPP). Condensation of indole-3-glycerol phosphate with GGPP by the prenyl transferase ptmC then forms 3-geranylgeranylindole (3-GGI). Epoxidation by the FAD-dependent monooxygenase ptmM leads to a epoxidized-GGI that is substrate of the terpene cyclase ptmB for cyclization to yield paspaline. Paspaline is subsequently converted to 13-desoxypaxilline by the cytochrome P450 monooxygenase ptmP, the latter being then converted to paxilline by the cytochrome P450 monooxygenase ptmQ. Paxilline is converted to beta-paxitriol via C-10 ketoreduction by the short-chain dehydrogenase ptmH which can be monoprenylated at the C-20 by the indole diterpene prenyltransferase ptmD. A two-step elimination (acetylation and elimination) process performed by the O-acetyltransferase ptmV and ptmI leads to the production of the prenylated form of penijanthine. The FAD-linked oxidoreductase ptmO then converts the prenylated form of penijanthine into PC-M5 which is in turn transformed into PC-M4 by the aromatic dimethylallyltransferase ptmE. Five sequential oxidative transformations performed by the cytochrome P450 monooxygenases ptmK, ptmU, ptmL, ptmN and ptmJ yield the various penitrem compounds. PtmK, ptmU and ptmM are involved in the formation of the key bicyclic ring of penitrem C via the formation of the intermediates secopenitrem D and penitrem D. PtmL catalyzes the epoxidation of penitrem D and C to yield penitrem B and F, respectively. PtmJ catalyzes the last benzylic hydroxylation to convert penitrem B to prenitrem E and penitrem F to penitrem A. The protein is FAD-dependent monooxygenase ptmM of Penicillium ochrochloron.